A 264-amino-acid chain; its full sequence is DNA repair protein RecO (264 aa).

The protein belongs to the RecO family.

In terms of biological role, involved in DNA repair and RecF pathway recombination. In Prosthecochloris aestuarii (strain DSM 271 / SK 413), this protein is DNA repair protein RecO.